The sequence spans 407 residues: MTTAESPATRDTAIFDLIRQEAERQRSGLELIASENFTSAAVREAQGSVLTNKYAEGYPGKRWYGGCEIVDQVEQLAIDRVKELFGAAWANVQPHSGSSANLAVYNALIEPGDTVLGMDLSHGGHLTHGNPVNFSGLRYKIVGYQVNPETELIDMNVVRRLAHEHRPKMIIAGASAYSRSIDFAAFREIADEVGAILFADIAHIAGLIAAGEHPNALPHAHVVASTTHKTLRGPRGGIILSNDLELGAKIDRAVFPGYQGGPLEHVIAAKAVAFGEALRPEFKDYARQVIRNAQALAIAFQQRGYRVVSGGTDNHLLVLDLRAQGLNGTKATKRLDANHITISKSTLPYDTEKILHGGGIRLGTPAVTTRGMTEEHMQVIADLIDRALKGEDVQAEVHDFAGRFPLP.

(6S)-5,6,7,8-tetrahydrofolate-binding positions include L120 and 124–126 (GHL). N6-(pyridoxal phosphate)lysine is present on K229.

The protein belongs to the SHMT family. In terms of assembly, homodimer. The cofactor is pyridoxal 5'-phosphate.

The protein resides in the cytoplasm. It carries out the reaction (6R)-5,10-methylene-5,6,7,8-tetrahydrofolate + glycine + H2O = (6S)-5,6,7,8-tetrahydrofolate + L-serine. The protein operates within one-carbon metabolism; tetrahydrofolate interconversion. Its pathway is amino-acid biosynthesis; glycine biosynthesis; glycine from L-serine: step 1/1. Catalyzes the reversible interconversion of serine and glycine with tetrahydrofolate (THF) serving as the one-carbon carrier. This reaction serves as the major source of one-carbon groups required for the biosynthesis of purines, thymidylate, methionine, and other important biomolecules. Also exhibits THF-independent aldolase activity toward beta-hydroxyamino acids, producing glycine and aldehydes, via a retro-aldol mechanism. The polypeptide is Serine hydroxymethyltransferase (Deinococcus deserti (strain DSM 17065 / CIP 109153 / LMG 22923 / VCD115)).